An 88-amino-acid polypeptide reads, in one-letter code: Sec-independent protein translocase protein TatA (88 aa).

A helical transmembrane segment spans residues 1–21; that stretch reads MGGIGIWQLAIITVIVILLFG. Residues 46–88 are disordered; it reads DNDKDSTQVDDKDSTQVDDNAKQPSNKKVEENIKEQSKEKDRA.

This sequence belongs to the TatA/E family. The Tat system comprises two distinct complexes: a TatABC complex, containing multiple copies of TatA, TatB and TatC subunits, and a separate TatA complex, containing only TatA subunits. Substrates initially bind to the TatABC complex, which probably triggers association of the separate TatA complex to form the active translocon.

It localises to the cell inner membrane. In terms of biological role, part of the twin-arginine translocation (Tat) system that transports large folded proteins containing a characteristic twin-arginine motif in their signal peptide across membranes. TatA could form the protein-conducting channel of the Tat system. The chain is Sec-independent protein translocase protein TatA from Psychromonas ingrahamii (strain DSM 17664 / CCUG 51855 / 37).